The chain runs to 446 residues: Histidinol dehydrogenase homolog (446 aa).

A Zn(2+)-binding site is contributed by H266. Catalysis depends on proton acceptor residues E334 and H335. H427 contacts Zn(2+).

The protein belongs to the histidinol dehydrogenase family. Zn(2+) is required as a cofactor.

The chain is Histidinol dehydrogenase homolog from Colwellia psychrerythraea (strain 34H / ATCC BAA-681) (Vibrio psychroerythus).